The following is a 1087-amino-acid chain: Band 4.1-like protein 3 (1087 aa).

Position 1 is an N-acetylmethionine (Met1). The tract at residues 1 to 43 is disordered; the sequence is MTTESGSDSESKPDQEAEPQEAAGAQGRAGAPVPEPPKEEQQQ. At Thr2 the chain carries N-acetylthreonine; in Band 4.1-like protein 3, N-terminally processed. Residues 20–32 are compositionally biased toward low complexity; it reads QEAAGAQGRAGAP. At Ser88 the chain carries Phosphoserine. Positions 110–391 constitute an FERM domain; it reads MQCKVILLDG…EHHTFFRLLL (282 aa). Positions 394–513 are hydrophilic; that stretch reads APPKKFLTLG…PGLGTDSCPL (120 aa). Residues Ser420, Ser443, and Ser460 each carry the phosphoserine modification. The segment covering 459–469 has biased composition (polar residues); that stretch reads ISQTNLITTVT. Disordered stretches follow at residues 459 to 529, 541 to 563, 675 to 715, and 937 to 965; these read ISQT…TELR, GYEPSRAEHLPGEPALDSDGPGR, SASL…EDAE, and SETLEQKPHFESSTVKTETISFGSVSPGG. Phosphothreonine is present on residues Thr469 and Thr492. Residues 514 to 860 are spectrin--actin-binding; it reads SPPSTHCAPT…VVQETVLVEE (347 aa). Residues 516–526 show a composition bias toward polar residues; that stretch reads PSTHCAPTSPT. Positions 681 to 691 are enriched in acidic residues; sequence DPSDSSEEETD. Residues 698-707 are compositionally biased toward low complexity; sequence AADGETTATE. At Thr706 the chain carries Phosphothreonine. A phosphoserine mark is found at Ser708, Ser960, and Ser962. The segment at 861 to 1083 is C-terminal (CTD); the sequence is RRVVHASGDA…VHKETEITPE (223 aa). Residues 947–960 are compositionally biased toward polar residues; it reads ESSTVKTETISFGS. Thr1081 is modified (phosphothreonine).

In terms of assembly, interacts (via FERM domain) with CADM1. Interacts (via FERM domain) with PRMT3; the interaction is direct and inhibits the protein-arginine N-methyltransferase activity of PRMT3. Interacts with PRMT5. Interacts with PRMT6. In terms of tissue distribution, expressed at high levels in brain, with lower levels in kidney, intestine, and testis. Detected in lung.

It is found in the cytoplasm. It localises to the cytoskeleton. The protein resides in the cell junction. The protein localises to the cell membrane. Tumor suppressor that inhibits cell proliferation and promotes apoptosis. Modulates the activity of protein arginine N-methyltransferases, including PRMT3 and PRMT5. This chain is Band 4.1-like protein 3, found in Homo sapiens (Human).